A 588-amino-acid polypeptide reads, in one-letter code: UDP-N-acetylmuramate--L-alanine ligase (588 aa).

119-125 (GSHGKST) serves as a coordination point for ATP. Over residues 344 to 371 (VPAAAGAAAAPPVRRDPATAAAAATTAP) the composition is skewed to low complexity. The disordered stretch occupies residues 344–411 (VPAAAGAAAA…APAAGPDHAA (68 aa)). Over residues 372–381 (IGPPDSPPPT) the composition is skewed to pro residues. Positions 382 to 411 (GIALPRAAPPAVDAPVAATPAPAAGPDHAA) are enriched in low complexity.

The protein belongs to the MurCDEF family.

It is found in the cytoplasm. The enzyme catalyses UDP-N-acetyl-alpha-D-muramate + L-alanine + ATP = UDP-N-acetyl-alpha-D-muramoyl-L-alanine + ADP + phosphate + H(+). It functions in the pathway cell wall biogenesis; peptidoglycan biosynthesis. In terms of biological role, cell wall formation. The chain is UDP-N-acetylmuramate--L-alanine ligase from Frankia alni (strain DSM 45986 / CECT 9034 / ACN14a).